A 209-amino-acid chain; its full sequence is MSKVIEVNHPLVLHKLSMVRSKDTGSKDFKELVKEISMLLTYEATRDINMDEVEIETPVCKTKCRVVSGKKMAIVPILRAGLGMVDGVLSLIPAAKIGHIGLYRDEETLQPVEYFCKLPKDIEERDVIVVDPMLATGGSAADALTMLKEKGAKNLKLMCLISAPEGIKLVQEKHPDVDIYVASIDEKLNEKGYIVPGLGDAGDRLYGTK.

5-phospho-alpha-D-ribose 1-diphosphate is bound by residues Arg-79, Arg-104, and 131 to 139; that span reads DPMLATGGS. Uracil is bound by residues Ile-194 and 199–201; that span reads GDA. Residue Asp-200 coordinates 5-phospho-alpha-D-ribose 1-diphosphate.

The protein belongs to the UPRTase family. Requires Mg(2+) as cofactor.

The enzyme catalyses UMP + diphosphate = 5-phospho-alpha-D-ribose 1-diphosphate + uracil. It participates in pyrimidine metabolism; UMP biosynthesis via salvage pathway; UMP from uracil: step 1/1. Allosterically activated by GTP. Catalyzes the conversion of uracil and 5-phospho-alpha-D-ribose 1-diphosphate (PRPP) to UMP and diphosphate. The chain is Uracil phosphoribosyltransferase from Clostridium botulinum (strain Alaska E43 / Type E3).